A 421-amino-acid polypeptide reads, in one-letter code: Gamma-glutamyl phosphate reductase (421 aa).

Belongs to the gamma-glutamyl phosphate reductase family.

Its subcellular location is the cytoplasm. It carries out the reaction L-glutamate 5-semialdehyde + phosphate + NADP(+) = L-glutamyl 5-phosphate + NADPH + H(+). It functions in the pathway amino-acid biosynthesis; L-proline biosynthesis; L-glutamate 5-semialdehyde from L-glutamate: step 2/2. Catalyzes the NADPH-dependent reduction of L-glutamate 5-phosphate into L-glutamate 5-semialdehyde and phosphate. The product spontaneously undergoes cyclization to form 1-pyrroline-5-carboxylate. The chain is Gamma-glutamyl phosphate reductase from Roseobacter denitrificans (strain ATCC 33942 / OCh 114) (Erythrobacter sp. (strain OCh 114)).